We begin with the raw amino-acid sequence, 314 residues long: Oxidoreductase poxI (314 aa).

Belongs to the NmrA-type oxidoreductase family. Isoflavone reductase subfamily.

The protein operates within secondary metabolite biosynthesis. In terms of biological role, oxidoreductase; part of the gene cluster that mediates the biosynthesis of oxaleimides, cytotoxic compounds containing an unusual disubstituted succinimide moiety. The first step of the pathway is provided by the HR-PKS poxF that serves in a new mode of collaborative biosynthesis with the PKS-NRPS poxE, by providing the olefin containing amino acid substrate via the synthesis of an ACP-bound dec-4-enoate. The cytochrome P450 monooxygenase poxM-catalyzed oxidation at the alpha-position creates the enzyme-bound 2-hydroxydec-4-enoyl-ACP thioester, which may be prone to spontaneous hydrolysis to yield 2-hydroxydec-4-enoic acid due to increased electrophilicity of the carbonyl. 2-hydroxydec-4-enoic acid can then be further oxidized by poxM to yield the alpha-ketoacid 2-oxodec-4-enoicacid, which is reductively aminated by the aminotransferase poxL to yield (S,E)-2-aminodec-4-enoic acid. The Hybrid PKS-NRPS synthetase poxE then performs condensation between the octaketide product of its PKS modules and the amino group of (S,E)-2-aminodec-4-enoic acid which is activated and incorporated by the adenylation domain. The resulting aminoacyl product can be cyclized by the Diels-Alderase PoxQ and reductively released by the reductive (R) domain of poxE to yield an aldehyde intermediate. The released aldehyde is then substrate for a Knoevenagel condensation by the hydrolyase poxO followed by an oxidation at the 5-position of the pyrrolidone ring. The presence of the olefin from the amino acid building block allows for migration of the substituted allyl group to occur. This allylic transposition reaction takes place in a conjugate addition, semipinacol-like fashion to yield a succinimide intermediate. Iterative two-electron oxidations of the C7 methyl of the succinimide intermediate to the carboxylic acid can be catalyzed by one of two remaining cytochrome P450 monooxygenasess poxC or poxD to yield oxaleimide A. Subsequent oxidation yields the maleimide scaffold oxaleimide I. Both oxaleimide A and oxaleimide I can undergo oxidative modifications in the decalin ring to yield the series of products oxaleimides B to H. This is Oxidoreductase poxI from Penicillium oxalicum (strain 114-2 / CGMCC 5302) (Penicillium decumbens).